A 355-amino-acid polypeptide reads, in one-letter code: Probable protein phosphatase 2C 21 (355 aa).

The PPM-type phosphatase domain maps to 23–329; that stretch reads RFGLSSMQGW…DNMTIILVQF (307 aa). 4 residues coordinate Mn(2+): Asp57, Gly58, Asp272, and Asp320. Residues 329–355 are disordered; sequence FKKPNPSETEPEDSKPEPSEDEPSSSS.

The protein belongs to the PP2C family. Requires Mg(2+) as cofactor. It depends on Mn(2+) as a cofactor.

The enzyme catalyses O-phospho-L-seryl-[protein] + H2O = L-seryl-[protein] + phosphate. It carries out the reaction O-phospho-L-threonyl-[protein] + H2O = L-threonyl-[protein] + phosphate. This chain is Probable protein phosphatase 2C 21 (PPC4-2), found in Arabidopsis thaliana (Mouse-ear cress).